Reading from the N-terminus, the 99-residue chain is Integration host factor subunit alpha (99 aa).

The protein belongs to the bacterial histone-like protein family. Heterodimer of an alpha and a beta chain.

This protein is one of the two subunits of integration host factor, a specific DNA-binding protein that functions in genetic recombination as well as in transcriptional and translational control. The chain is Integration host factor subunit alpha (ihfA) from Xanthomonas axonopodis pv. citri (strain 306).